Consider the following 676-residue polypeptide: WD repeat-containing protein 48 (676 aa).

Tyr-28 is modified (phosphotyrosine). 8 WD repeats span residues 28-67 (YNRN…QDPY), 73-112 (HHTD…CMST), 115-154 (THKD…ALTA), 166-205 (GNKD…KLMK), 208-247 (GHTD…CIAT), 250-289 (VHDE…IRVL), 292-334 (EEKA…NFRA), and 358-397 (KGGA…KVED). Residue Lys-214 is modified to N6-acetyllysine. The residue at position 578 (Lys-578) is an N6-acetyllysine. The tract at residues 607–628 (LDNESQTTSSSNNEKPEQEKEE) is disordered. Residues 609–619 (NESQTTSSSNN) show a composition bias toward low complexity. Phosphothreonine is present on Thr-613.

This sequence belongs to the WD repeat WDR48 family. Interacts with USP46. Interacts with USP1. Interacts with USP12. Component of the USP12-WDR20-WDR48 deubiquitinating complex. Component of the USP12-DMWD-WDR48 deubiquitinating complex. Interacts with PHLPP1. Interacts with RAD51AP1; the interaction is direct and promotes formation of a trimeric complex with RAD51 via RAD51AP1. Interacts with ATAD5; the interaction regulates USP1-mediated PCNA deubiquitination. Interacts with RAD51; the interaction is enhanced under replication stress. Interacts with ITCH; the interaction is more efficient when both USP12 and WDR48/UAF1 are involved and may facilitate recruitment of the USP12 deubiquitinating complex to Notch.

It localises to the nucleus. The protein localises to the cytoplasm. The protein resides in the lysosome. It is found in the late endosome. Its function is as follows. Regulator of deubiquitinating complexes, which acts as a strong activator of USP1, USP12 and USP46. Enhances the USP1-mediated deubiquitination of FANCD2; USP1 being almost inactive by itself. Activates deubiquitination by increasing the catalytic turnover without increasing the affinity of deubiquitinating enzymes for the substrate. Also activates deubiquitinating activity of complexes containing USP12. Docks at the distal end of the USP12 fingers domain and induces a cascade of structural changes leading to the activation of the enzyme. Together with RAD51AP1, promotes DNA repair by stimulating RAD51-mediated homologous recombination. Binds single-stranded DNA (ssDNA) and double-stranded DNA (dsDNA). DNA-binding is required both for USP1-mediated deubiquitination of FANCD2 and stimulation of RAD51-mediated homologous recombination: both WDR48/UAF1 and RAD51AP1 have coordinated role in DNA-binding during these processes. Together with ATAD5 and by regulating USP1 activity, has a role in PCNA-mediated translesion synthesis (TLS) by deubiquitinating monoubiquitinated PCNA. Together with ATAD5, has a role in recruiting RAD51 to stalled forks during replication stress. The chain is WD repeat-containing protein 48 (Wdr48) from Mus musculus (Mouse).